The following is a 348-amino-acid chain: Tripartite motif-containing protein 16-like protein (348 aa).

The B30.2/SPRY domain occupies 139-337; sequence YWTSKPEPST…RIVDLGEEPE (199 aa).

Belongs to the TRIM/RBCC family.

The protein localises to the cytoplasm. The polypeptide is Tripartite motif-containing protein 16-like protein (TRIM16L) (Homo sapiens (Human)).